Consider the following 279-residue polypeptide: Phosphonates import ATP-binding protein PhnC (279 aa).

The ABC transporter domain maps to 2–245 (FQLKNVTRQF…AVAAIYGAET (244 aa)). 34 to 41 (GRSGAGKS) contacts ATP.

It belongs to the ABC transporter superfamily. Phosphonates importer (TC 3.A.1.9.1) family. The complex is composed of two ATP-binding proteins (PhnC), two transmembrane proteins (PhnE) and a solute-binding protein (PhnD).

Its subcellular location is the cell inner membrane. The enzyme catalyses phosphonate(out) + ATP + H2O = phosphonate(in) + ADP + phosphate + H(+). Its function is as follows. Part of the ABC transporter complex PhnCDE involved in phosphonates import. Responsible for energy coupling to the transport system. The polypeptide is Phosphonates import ATP-binding protein PhnC (Rhizobium meliloti (strain 1021) (Ensifer meliloti)).